The chain runs to 871 residues: DNA mismatch repair protein MutS (871 aa).

617 to 624 (GPNMGGKS) contacts ATP.

The protein belongs to the DNA mismatch repair MutS family.

Its function is as follows. This protein is involved in the repair of mismatches in DNA. It is possible that it carries out the mismatch recognition step. This protein has a weak ATPase activity. The protein is DNA mismatch repair protein MutS of Hydrogenovibrio crunogenus (strain DSM 25203 / XCL-2) (Thiomicrospira crunogena).